The chain runs to 235 residues: Transcriptional regulatory protein MalR (235 aa).

In terms of domain architecture, Response regulatory spans 3–119 (NVLIVEDDPM…RFQTALSDYR (117 aa)). Aspartate 54 is modified (4-aspartylphosphate). Residues 178–197 (TEDLAKHTEISQVSIRKYLK) constitute a DNA-binding region (H-T-H motif).

Post-translationally, phosphorylated and activated by MalK.

Its subcellular location is the cytoplasm. In terms of biological role, member of a two-component regulatory system MalK/MalR. Activates transcription of maeA, maeN and yflS in presence of malate by binding to their promoter region. In Bacillus subtilis (strain 168), this protein is Transcriptional regulatory protein MalR (malR).